The following is a 173-amino-acid chain: uncharacterized protein (173 aa).

Disordered regions lie at residues 1-23 and 48-173; these read MGDL…GDVA and TGAA…APQR. Low complexity predominate over residues 49–60; sequence GAAPGSAQAGPP. Pro residues predominate over residues 70-83; it reads PRGPQAPPRLPPSL. Residues 123 to 136 show a composition bias toward low complexity; that stretch reads PACAGSSAPGSPAA.

This is an uncharacterized protein from Homo sapiens (Human).